We begin with the raw amino-acid sequence, 412 residues long: FAD-dependent monooxygenase nscC (412 aa).

An N-terminal signal peptide occupies residues 1–21; sequence MAKPQATVLIIGAGISGLTTS. FAD is bound by residues E35 and A46. N92 carries N-linked (GlcNAc...) asparagine glycosylation. R119 lines the FAD pocket. N170 and N231 each carry an N-linked (GlcNAc...) asparagine glycan. FAD contacts are provided by D326 and G339.

This sequence belongs to the paxM FAD-dependent monooxygenase family. The cofactor is FAD.

The protein operates within secondary metabolite biosynthesis. FAD-dependent monooxygenase; part of the gene cluster that mediates the biosynthesis of neosartoricin B, a prenylated anthracenone that probably exhibits T-cell antiproliferative activity, suggestive of a physiological role as an immunosuppressive agent. The non-reducing polyketide synthase nscA probably synthesizes and cyclizes the decaketide backbone. The hydrolase nscB then mediates the product release through hydrolysis followed by spontaneous decarboxylation. The prenyltransferase nscD catalyzes the addition of the dimethylallyl group to the aromatic C5. The FAD-dependent monooxygenase nscC is then responsible for the stereospecific hydroxylation at C2. Neosartoricin B can be converted into two additional compounds neosartoricins C and D. Neosartoricin C is a spirocyclic compound that is cyclized through the attack of C3 hydroxyl on C14, followed by dehydration. On the other hand, neosartoricin D is a further cyclized compound in which attack of C2 on C14 in neosartoricin C results in the formation of the acetal-containing dioxabicyclo-octanone ring. Both of these compounds are novel and possibly represent related metabolites of the gene cluster. This is FAD-dependent monooxygenase nscC from Arthroderma otae (strain ATCC MYA-4605 / CBS 113480) (Microsporum canis).